Reading from the N-terminus, the 366-residue chain is Chorismate synthase (366 aa).

Arg-48 and Arg-54 together coordinate NADP(+). Residues 125 to 127, 238 to 239, Gly-278, 293 to 297, and Arg-319 each bind FMN; these read RSS, NA, and KPTSS.

It belongs to the chorismate synthase family. Homotetramer. The cofactor is FMNH2.

The enzyme catalyses 5-O-(1-carboxyvinyl)-3-phosphoshikimate = chorismate + phosphate. It participates in metabolic intermediate biosynthesis; chorismate biosynthesis; chorismate from D-erythrose 4-phosphate and phosphoenolpyruvate: step 7/7. Functionally, catalyzes the anti-1,4-elimination of the C-3 phosphate and the C-6 proR hydrogen from 5-enolpyruvylshikimate-3-phosphate (EPSP) to yield chorismate, which is the branch point compound that serves as the starting substrate for the three terminal pathways of aromatic amino acid biosynthesis. This reaction introduces a second double bond into the aromatic ring system. This chain is Chorismate synthase, found in Herminiimonas arsenicoxydans.